The following is a 115-amino-acid chain: NADH-ubiquinone oxidoreductase chain 3 (115 aa).

A run of 3 helical transmembrane segments spans residues 3–23 (LLMA…IAFW), 55–75 (FFLV…LLPL), and 84–104 (LSAM…GLMY).

This sequence belongs to the complex I subunit 3 family. In terms of assembly, core subunit of respiratory chain NADH dehydrogenase (Complex I) which is composed of 45 different subunits. Interacts with TMEM186. Interacts with TMEM242.

Its subcellular location is the mitochondrion inner membrane. It catalyses the reaction a ubiquinone + NADH + 5 H(+)(in) = a ubiquinol + NAD(+) + 4 H(+)(out). Core subunit of the mitochondrial membrane respiratory chain NADH dehydrogenase (Complex I) which catalyzes electron transfer from NADH through the respiratory chain, using ubiquinone as an electron acceptor. Essential for the catalytic activity of complex I. The polypeptide is NADH-ubiquinone oxidoreductase chain 3 (Sigmodon ochrognathus (Yellow-nosed cotton rat)).